Reading from the N-terminus, the 267-residue chain is O-methyltransferase (267 aa).

Positions 100 and 145 each coordinate S-adenosyl-L-methionine.

This sequence belongs to the methyltransferase superfamily.

It functions in the pathway antifungal biosynthesis. Functionally, O-methyltransferase; part of the gene cluster that mediates the biosynthesis of the tetrahydropyranyl antifungal agent lanomycin that acts as an inhibitor of CYP51 and blocks the ergosterol biosynthesis. The biosynthesis probably begins with the formation of an hexaketide, followed by methionine mediated alkylation of C-2 and C-6, and methylation of the reduced C-3 oxygen, pyran forming reductive ring closure, oxygenation of C-4, beta-keto reduction, enoyl reduction and dehydration of the remaining oxygens, and finally, acylation with glycine to complete the biosynthesis. The protein is O-methyltransferase of Pyrenophora dematioidea (Helminthosporium dematioideum).